Reading from the N-terminus, the 216-residue chain is MKINTVLFDLDGTLINTNELIISSFLHTLNTYYPDQYKREDVLPFIGPSLHDTFSKIDESKVEELITSYRQFNHDHHDELVEEYETVYETVQELKKQGYKVGIVTTKARQTVEMGLKLSKLDEFFDVVVTIDDVEHVKPHPEPLQKALQLLDAKPEEALMVGDNHHDIVGGQNAGTKTAAVSWTLKGRAYLEAYKPDFMLDKMSDLLPILSDMNRS.

The active-site Nucleophile is the aspartate 9.

It belongs to the HAD-like hydrolase superfamily. PpaX family. The cofactor is Mg(2+).

It carries out the reaction diphosphate + H2O = 2 phosphate + H(+). Hydrolyzes pyrophosphate formed during P-Ser-HPr dephosphorylation by HPrK/P. Might play a role in controlling the intracellular pyrophosphate pool. This chain is Pyrophosphatase PpaX, found in Bacillus cereus (strain Q1).